Here is a 192-residue protein sequence, read N- to C-terminus: Mediator of RNA polymerase II transcription subunit 29 (192 aa).

Residues 32–51 form a disordered region; it reads MQQQSPQQMQPAPVPQQTQQ.

Belongs to the Mediator complex subunit 29 family. Component of the Mediator complex.

The protein resides in the nucleus. Its function is as follows. Component of the Mediator complex, a coactivator involved in the regulated transcription of nearly all RNA polymerase II-dependent genes. Mediator functions as a bridge to convey information from gene-specific regulatory proteins to the basal RNA polymerase II transcription machinery. Mediator is recruited to promoters by direct interactions with regulatory proteins and serves as a scaffold for the assembly of a functional preinitiation complex with RNA polymerase II and the general transcription factors. This Bombyx mori (Silk moth) protein is Mediator of RNA polymerase II transcription subunit 29 (ix).